A 133-amino-acid chain; its full sequence is Ribonucleases P/MRP protein subunit POP8 (133 aa).

As to quaternary structure, component of nuclear RNase P and RNase MRP complexes. RNase P consists of an RNA moiety and at least 9 protein subunits including POP1, POP3, POP4, POP5, POP6, POP7, POP8, RPP1 and RPR2. RNase MRP complex consists of an RNA moiety and at least 10 protein subunits including POP1, POP3, POP4, POP5, POP6, POP7, POP8, RMP1, RPP1 and SNM1, many of which are shared with the RNase P complex.

The protein resides in the nucleus. It carries out the reaction Endonucleolytic cleavage of RNA, removing 5'-extranucleotides from tRNA precursor.. In terms of biological role, component of ribonuclease P, a protein complex that generates mature tRNA molecules by cleaving their 5'-ends. Also a component of RNase MRP, which cleaves pre-rRNA sequences. The protein is Ribonucleases P/MRP protein subunit POP8 (POP8) of Saccharomyces cerevisiae (strain ATCC 204508 / S288c) (Baker's yeast).